The primary structure comprises 270 residues: Peflin (270 aa).

Residues 1-97 form a disordered region; sequence MSYQYGQGYS…YRQQGSAGNV (97 aa). 5 tandem repeats follow at residues 22-30, 44-54, 62-70, 72-81, and 83-91. The 5 X 9 AA approximate tandem repeat of [AP]-P-G-G-P-Y-G-G-P-P stretch occupies residues 22 to 91; that stretch reads PPRAPYAGGP…QPQGGPYRQQ (70 aa). Low complexity-rich tracts occupy residues 26–47 and 55–66; these read PYAG…PPGQ and YGSYGQPGPRAP. Residues 67-84 are compositionally biased toward gly residues; it reads YGGGQAPGGPYGGYGQPQ. EF-hand domains follow at residues 100–135, 141–169, 170–202, 203–239, and 240–269; these read GVNP…FNNS, TCIM…WTFL, QQWR…MGYN, LSPQ…LQSM, and TQAF…ITRL. Ca(2+) is bound by residues aspartate 113, aspartate 115, serine 117, tyrosine 119, and glutamate 124. Aspartate 180, aspartate 182, serine 184, serine 186, and glutamate 191 together coordinate Ca(2+).

As to quaternary structure, heterodimer; heterodimerizes (via the EF-hand 5) with pdcd6.

Its subcellular location is the cytoplasm. It is found in the endoplasmic reticulum. The protein resides in the membrane. It localises to the cytoplasmic vesicle. The protein localises to the COPII-coated vesicle membrane. Functionally, calcium-binding protein that acts as an adapter that bridges unrelated proteins or stabilizes weak protein-protein complexes in response to calcium. Acts as a negative regulator of ER-Golgi transport. This chain is Peflin, found in Danio rerio (Zebrafish).